The sequence spans 350 residues: Erythronate-4-phosphate dehydrogenase (350 aa).

2 residues coordinate substrate: Ser45 and Thr66. NAD(+)-binding positions include 124-125 (QV), Asp144, 203-205 (ASR), and Asp226. Arg205 is an active-site residue. Glu231 is an active-site residue. The Proton donor role is filled by His248. Gly251 is a binding site for NAD(+).

Belongs to the D-isomer specific 2-hydroxyacid dehydrogenase family. PdxB subfamily. In terms of assembly, homodimer.

It localises to the cytoplasm. It carries out the reaction 4-phospho-D-erythronate + NAD(+) = (R)-3-hydroxy-2-oxo-4-phosphooxybutanoate + NADH + H(+). It participates in cofactor biosynthesis; pyridoxine 5'-phosphate biosynthesis; pyridoxine 5'-phosphate from D-erythrose 4-phosphate: step 2/5. Its function is as follows. Catalyzes the oxidation of erythronate-4-phosphate to 3-hydroxy-2-oxo-4-phosphonooxybutanoate. This is Erythronate-4-phosphate dehydrogenase from Legionella pneumophila subsp. pneumophila (strain Philadelphia 1 / ATCC 33152 / DSM 7513).